A 258-amino-acid chain; its full sequence is Thiazole synthase 1 (258 aa).

The active-site Schiff-base intermediate with DXP is the Lys-97. 1-deoxy-D-xylulose 5-phosphate is bound by residues Gly-158, 184–185 (AG), and 206–207 (NT).

The protein belongs to the ThiG family. Homotetramer. Forms heterodimers with either ThiH or ThiS.

Its subcellular location is the cytoplasm. The catalysed reaction is [ThiS sulfur-carrier protein]-C-terminal-Gly-aminoethanethioate + 2-iminoacetate + 1-deoxy-D-xylulose 5-phosphate = [ThiS sulfur-carrier protein]-C-terminal Gly-Gly + 2-[(2R,5Z)-2-carboxy-4-methylthiazol-5(2H)-ylidene]ethyl phosphate + 2 H2O + H(+). It participates in cofactor biosynthesis; thiamine diphosphate biosynthesis. In terms of biological role, catalyzes the rearrangement of 1-deoxy-D-xylulose 5-phosphate (DXP) to produce the thiazole phosphate moiety of thiamine. Sulfur is provided by the thiocarboxylate moiety of the carrier protein ThiS. In vitro, sulfur can be provided by H(2)S. The sequence is that of Thiazole synthase 1 from Syntrophotalea carbinolica (strain DSM 2380 / NBRC 103641 / GraBd1) (Pelobacter carbinolicus).